Reading from the N-terminus, the 63-residue chain is Cecropin-2 (63 aa).

Positions 1 to 23 (MNFYKVFIFVALILAISLGQSEA) are cleaved as a signal peptide. Arginine amide is present on arginine 62.

Belongs to the cecropin family.

It is found in the secreted. In terms of biological role, cecropins have lytic and antibacterial activity against several Gram-positive and Gram-negative bacteria. The protein is Cecropin-2 (Cec2A) of Drosophila virilis (Fruit fly).